The primary structure comprises 449 residues: Tubulin alpha-2 chain (449 aa).

Residue glutamine 11 participates in GTP binding. Lysine 40 bears the N6-acetyllysine mark. The GTP site is built by glutamate 71, serine 140, glycine 144, threonine 145, threonine 179, asparagine 206, and asparagine 228. Glutamate 71 is a binding site for Mg(2+). Residue glutamate 254 is part of the active site.

The protein belongs to the tubulin family. Dimer of alpha and beta chains. A typical microtubule is a hollow water-filled tube with an outer diameter of 25 nm and an inner diameter of 15 nM. Alpha-beta heterodimers associate head-to-tail to form protofilaments running lengthwise along the microtubule wall with the beta-tubulin subunit facing the microtubule plus end conferring a structural polarity. Microtubules usually have 13 protofilaments but different protofilament numbers can be found in some organisms and specialized cells. The cofactor is Mg(2+). In terms of processing, undergoes a tyrosination/detyrosination cycle, the cyclic removal and re-addition of a C-terminal tyrosine residue by the enzymes tubulin tyrosine carboxypeptidase (TTCP) and tubulin tyrosine ligase (TTL), respectively. Acetylation of alpha chains at Lys-40 stabilizes microtubules and affects affinity and processivity of microtubule motors. This modification has a role in multiple cellular functions, ranging from cell motility, cell cycle progression or cell differentiation to intracellular trafficking and signaling. During the early stages of oogenesis lky/Alpha-tubulin N-acetyltransferase 2 is the main acetyltransferase responsible for Lys-40 acetylation in germline cells while Atat/alpha-tubulin N-acetyltransferase 1 is the main acetyltransferase responsible for Lys-40 acetylation in somatic cells.

It localises to the cytoplasm. It is found in the cytoskeleton. The catalysed reaction is GTP + H2O = GDP + phosphate + H(+). In terms of biological role, tubulin is the major constituent of microtubules, a cylinder consisting of laterally associated linear protofilaments composed of alpha- and beta-tubulin heterodimers. Microtubules grow by the addition of GTP-tubulin dimers to the microtubule end, where a stabilizing cap forms. Below the cap, tubulin dimers are in GDP-bound state, owing to GTPase activity of alpha-tubulin. This Drosophila melanogaster (Fruit fly) protein is Tubulin alpha-2 chain (alphaTub85E).